The primary structure comprises 25 residues: ATP-dependent 6-phosphofructokinase 2 (25 aa).

Gly11 is an ATP binding site.

Belongs to the phosphofructokinase type A (PFKA) family. ATP-dependent PFK group I subfamily. Prokaryotic clade 'B1' sub-subfamily. Homotetramer. The cofactor is Mg(2+).

The protein localises to the cytoplasm. The catalysed reaction is beta-D-fructose 6-phosphate + ATP = beta-D-fructose 1,6-bisphosphate + ADP + H(+). It participates in carbohydrate degradation; glycolysis; D-glyceraldehyde 3-phosphate and glycerone phosphate from D-glucose: step 3/4. Its activity is regulated as follows. In contrast with PFK1 this enzyme is not affected by phosphoenolpyruvate. Its function is as follows. Catalyzes the phosphorylation of D-fructose 6-phosphate to fructose 1,6-bisphosphate by ATP, the first committing step of glycolysis. This is ATP-dependent 6-phosphofructokinase 2 (pfkA2) from Thermus thermophilus (strain ATCC 27634 / DSM 579 / HB8).